The primary structure comprises 445 residues: Trigger factor (445 aa).

In terms of domain architecture, PPIase FKBP-type spans 166 to 251 (GDVVVVDFVG…AKALKRPVDV (86 aa)).

It belongs to the FKBP-type PPIase family. Tig subfamily.

It is found in the cytoplasm. The catalysed reaction is [protein]-peptidylproline (omega=180) = [protein]-peptidylproline (omega=0). Its function is as follows. Involved in protein export. Acts as a chaperone by maintaining the newly synthesized protein in an open conformation. Functions as a peptidyl-prolyl cis-trans isomerase. This chain is Trigger factor, found in Gluconacetobacter diazotrophicus (strain ATCC 49037 / DSM 5601 / CCUG 37298 / CIP 103539 / LMG 7603 / PAl5).